The following is a 328-amino-acid chain: Cytochrome f (328 aa).

Residues 1–44 (MRTFNFLSFPQVHRQALVKAVLVAIATVSLLLTSDVINPQSAQA) form the signal peptide. 4 residues coordinate heme: tyrosine 45, cysteine 66, cysteine 69, and histidine 70. The helical transmembrane segment at 294-314 (IKGLVLFLGGIMLCQILLVIK) threads the bilayer.

The protein belongs to the cytochrome f family. As to quaternary structure, the 4 large subunits of the cytochrome b6-f complex are cytochrome b6, subunit IV (17 kDa polypeptide, PetD), cytochrome f and the Rieske protein, while the 4 small subunits are PetG, PetL, PetM and PetN. The complex functions as a dimer. Heme serves as cofactor.

The protein localises to the cellular thylakoid membrane. Component of the cytochrome b6-f complex, which mediates electron transfer between photosystem II (PSII) and photosystem I (PSI), cyclic electron flow around PSI, and state transitions. The protein is Cytochrome f of Microcystis aeruginosa (strain NIES-843 / IAM M-2473).